The following is a 260-amino-acid chain: MSDSVCPIDAKEELLRECENIWKEMEKCQSKLTLLAAEPVPESDAKVSLLLTRMQALRAEYHQWQKRNPELISTNPEVLLLLGEEELQKVKKELEMVLSAVQLKNEKLKEDLEREQQWHDEQVQILNAFKEIEEEMKKEVVTDSEKRVFQELKNQMLELKEYKKKLMNALGEFLEEHFPLPEKNGNAKKKRYSEEPPEQVITIHEILEILLNQLMSTPHEPYVTVDDSFWPPYLELLLRSGIVLRHPEDPNRIRLEAFHE.

Residues glutamate 84–phenylalanine 173 are a coiled coil.

This sequence belongs to the CENP-K/MCM22 family. In terms of assembly, component of the CENPA-HI complex, at least composed of CENPH, CENPI, CENPK, CENPL, CENPM, CENPO and CENPP.

The protein resides in the nucleus. Its subcellular location is the chromosome. The protein localises to the centromere. It localises to the kinetochore. In terms of biological role, component of the CENPA-HI complex, a centromeric complex involved in assembly of kinetochore proteins, mitotic progression and chromosome segregation. The sequence is that of Centromere protein K (CENPK) from Gallus gallus (Chicken).